The primary structure comprises 201 residues: Small ribosomal subunit protein uS4c (201 aa).

Positions 91 to 151 constitute an S4 RNA-binding domain; sequence MRLDNIIFQL…TKNPEELRTI (61 aa).

This sequence belongs to the universal ribosomal protein uS4 family. Part of the 30S ribosomal subunit. Contacts protein S5. The interaction surface between S4 and S5 is involved in control of translational fidelity.

The protein resides in the plastid. It is found in the chloroplast. One of the primary rRNA binding proteins, it binds directly to 16S rRNA where it nucleates assembly of the body of the 30S subunit. In terms of biological role, with S5 and S12 plays an important role in translational accuracy. This is Small ribosomal subunit protein uS4c (rps4) from Welwitschia mirabilis (Tree tumbo).